Here is a 347-residue protein sequence, read N- to C-terminus: tRNA N6-adenosine threonylcarbamoyltransferase (347 aa).

2 residues coordinate Fe cation: H117 and H121. Substrate-binding positions include 140 to 144 (LVSGG), D173, G186, and N280. D308 contacts Fe cation.

Belongs to the KAE1 / TsaD family. The cofactor is Fe(2+).

It localises to the cytoplasm. The enzyme catalyses L-threonylcarbamoyladenylate + adenosine(37) in tRNA = N(6)-L-threonylcarbamoyladenosine(37) in tRNA + AMP + H(+). Its function is as follows. Required for the formation of a threonylcarbamoyl group on adenosine at position 37 (t(6)A37) in tRNAs that read codons beginning with adenine. Is involved in the transfer of the threonylcarbamoyl moiety of threonylcarbamoyl-AMP (TC-AMP) to the N6 group of A37, together with TsaE and TsaB. TsaD likely plays a direct catalytic role in this reaction. This chain is tRNA N6-adenosine threonylcarbamoyltransferase, found in Psychrobacter sp. (strain PRwf-1).